Reading from the N-terminus, the 61-residue chain is uncharacterized protein (61 aa).

This is an uncharacterized protein from Fowlpox virus (strain NVSL) (FPV).